Consider the following 220-residue polypeptide: MRLILLGAPGAGKGTQANFIKEKFGIPQISTGDMLRAAVKAGTPLGVEAKTYMDEGKLVPDSLIIGLVKERLKEADCANGYLFDGFPRTIAQADAMKEAGVAIDYVLEIDVPFSEIIERMSGRRTHPASGRTYHVKFNPPKVEGKDDVTGEPLVQRDDDKEETVKKRLDVYEAQTKPLITYYGDWARRGAENGLKAPAYRKISGLGAVEEIRARVFDALK.

10–15 (GAGKGT) is an ATP binding site. The NMP stretch occupies residues 30 to 59 (STGDMLRAAVKAGTPLGVEAKTYMDEGKLV). AMP-binding positions include threonine 31, arginine 36, 57 to 59 (KLV), 85 to 88 (GFPR), and glutamine 92. Residues 122–159 (GRRTHPASGRTYHVKFNPPKVEGKDDVTGEPLVQRDDD) form an LID region. Residues arginine 123 and 132–133 (TY) each bind ATP. AMP is bound by residues arginine 156 and arginine 167. ATP is bound at residue glycine 206.

The protein belongs to the adenylate kinase family. As to quaternary structure, monomer.

The protein localises to the cytoplasm. The enzyme catalyses AMP + ATP = 2 ADP. The protein operates within purine metabolism; AMP biosynthesis via salvage pathway; AMP from ADP: step 1/1. Catalyzes the reversible transfer of the terminal phosphate group between ATP and AMP. Plays an important role in cellular energy homeostasis and in adenine nucleotide metabolism. In Burkholderia mallei (strain NCTC 10247), this protein is Adenylate kinase.